The primary structure comprises 461 residues: Bifunctional protein HldE (461 aa).

The segment at 1–312 (MLEFLSQQKP…IRSFKSMSFE (312 aa)) is ribokinase. 191-194 (NKKE) lines the ATP pocket. Residue Asp-259 is part of the active site. Residues 334–461 (FTNGCFDIVH…KIIEKIKDKK (128 aa)) are cytidylyltransferase.

The protein in the N-terminal section; belongs to the carbohydrate kinase PfkB family. It in the C-terminal section; belongs to the cytidylyltransferase family. Homodimer.

It carries out the reaction D-glycero-beta-D-manno-heptose 7-phosphate + ATP = D-glycero-beta-D-manno-heptose 1,7-bisphosphate + ADP + H(+). It catalyses the reaction D-glycero-beta-D-manno-heptose 1-phosphate + ATP + H(+) = ADP-D-glycero-beta-D-manno-heptose + diphosphate. It participates in nucleotide-sugar biosynthesis; ADP-L-glycero-beta-D-manno-heptose biosynthesis; ADP-L-glycero-beta-D-manno-heptose from D-glycero-beta-D-manno-heptose 7-phosphate: step 1/4. The protein operates within nucleotide-sugar biosynthesis; ADP-L-glycero-beta-D-manno-heptose biosynthesis; ADP-L-glycero-beta-D-manno-heptose from D-glycero-beta-D-manno-heptose 7-phosphate: step 3/4. Catalyzes the phosphorylation of D-glycero-D-manno-heptose 7-phosphate at the C-1 position to selectively form D-glycero-beta-D-manno-heptose-1,7-bisphosphate. Its function is as follows. Catalyzes the ADP transfer from ATP to D-glycero-beta-D-manno-heptose 1-phosphate, yielding ADP-D-glycero-beta-D-manno-heptose. The polypeptide is Bifunctional protein HldE (Campylobacter jejuni (strain RM1221)).